The following is a 267-amino-acid chain: Kallikrein-14 (267 aa).

An N-terminal signal peptide occupies residues 1 to 34 (MSLRVLGSGTWPSAPKMFLLLTALQVLAIAMTQS). Residues 35–40 (QEDENK) constitute a propeptide, activation peptide. One can recognise a Peptidase S1 domain in the interval 41–265 (IIGGHTCTRS…YRSWIEETMR (225 aa)). 5 cysteine pairs are disulfide-bonded: Cys47/Cys180, Cys68/Cys84, Cys159/Cys226, Cys191/Cys205, and Cys216/Cys241. Catalysis depends on charge relay system residues His83 and Asp127. The active-site Charge relay system is Ser220.

It belongs to the peptidase S1 family. Kallikrein subfamily. In terms of processing, proteolytic cleavage of the activation peptide produces the active enzyme. As to expression, highly expressed in CNS, bone marrow and fetal liver. Also expressed in breast, thyroid, kidney, colon, pancreas, spleen, prostate, uterus, small intestine, placenta and skeletal muscle. Among 40 tissues tested, the highest expression is detected in skin followed by breast and prostate (at protein level). Expressed in stratum corneum by sweat ducts and sweat glands and detected in sweat (at protein level).

The protein localises to the secreted. It localises to the extracellular space. Inhibited by SERPINA1, SERPINC1, SERPINE1, SERPINF2, aprotinin, soybean, trypsin inhibitor and leupeptin. Inhibited by serine protease inhibitor SPINK5. Has an autoproteolytic activity which may have a regulatory effect. Activated by citrate and inhibited by zinc and to a lower extent by manganese. In terms of biological role, serine-type endopeptidase with a dual trypsin-like and chymotrypsin-like substrate specificity. May activate/inactivate the proteinase-activated receptors F2R, F2RL1 and F2RL3 and other kallikreins including KLK1, KLK3, KLK5 and KLK11. May function in seminal clot liquefaction through direct cleavage of the semenogelin SEMG1 and SEMG2 and activation of KLK3. May function through desmoglein DSG1 cleavage in epidermal desquamation a process by which the most superficial corneocytes are shed from the skin surface. May be involved in several aspects of tumor progression including growth, invasion and angiogenesis. The protein is Kallikrein-14 (KLK14) of Homo sapiens (Human).